A 298-amino-acid polypeptide reads, in one-letter code: MNEFERVRAYLTDLQDRICAAIEAVDGRARFQEDLWQRAEGGGGRTRVLRDGAVFEQAGIGFSDVSGSRLPPSASANRPELAGASWRATGVSLVFHPLNPYVPTTHANVRFFQAQRDGEVVASWFGGGFDLTPFYPFDEDVQHWHQVARDLCAPFGDERYAAHKRWCDEYFFLRHRNETRGVGGLFFDDLHGDFERDFAYLRAVGDGFLDAYLPIVQQRKDAIYGEREREFQLYRRGRYVEFNLVYDRGTLFGLQSGGRSESILMSLPPRVRWEYGFTPEAGSAEARLADYLVPRDWL.

S92 is a substrate binding site. A divalent metal cation is bound by residues H96 and H106. H106 serves as the catalytic Proton donor. Residue N108–R110 participates in substrate binding. H145 and H175 together coordinate a divalent metal cation. Positions Y239 to E274 are important for dimerization. Residue G257–R259 participates in substrate binding.

It belongs to the aerobic coproporphyrinogen-III oxidase family. Homodimer. Requires a divalent metal cation as cofactor.

The protein localises to the cytoplasm. It carries out the reaction coproporphyrinogen III + O2 + 2 H(+) = protoporphyrinogen IX + 2 CO2 + 2 H2O. Its pathway is porphyrin-containing compound metabolism; protoporphyrin-IX biosynthesis; protoporphyrinogen-IX from coproporphyrinogen-III (O2 route): step 1/1. In terms of biological role, involved in the heme biosynthesis. Catalyzes the aerobic oxidative decarboxylation of propionate groups of rings A and B of coproporphyrinogen-III to yield the vinyl groups in protoporphyrinogen-IX. The polypeptide is Oxygen-dependent coproporphyrinogen-III oxidase (Stenotrophomonas maltophilia (strain K279a)).